The following is a 529-amino-acid chain: Type I restriction enzyme StySJI methylase subunit (529 aa).

S-adenosyl-L-methionine-binding positions include 148–153 (QYFTPR), 178–180 (TAG), and glutamate 216. Residues 405-444 (YGEDPHGLSPREEGEWSFNAEESEVADSEENKNTDQHQAT) are disordered. The segment covering 407-418 (EDPHGLSPREEG) has biased composition (basic and acidic residues).

It belongs to the N(4)/N(6)-methyltransferase family. As to quaternary structure, the type I restriction/modification system is composed of three polypeptides R, M and S; the restriction enzyme has stoichiometry R(2)M(2)S(1) while the methyltransferase is M(2)S(1).

The catalysed reaction is a 2'-deoxyadenosine in DNA + S-adenosyl-L-methionine = an N(6)-methyl-2'-deoxyadenosine in DNA + S-adenosyl-L-homocysteine + H(+). Its function is as follows. The subtype gamma methyltransferase (M) subunit of a type I restriction enzyme. The M and S subunits together form a methyltransferase (MTase) that methylates two adenine residues of the sequence 5'-GAGN(6)GTRC-3'. In the presence of the R subunit the complex can also act as an endonuclease, binding to the same target sequence but cutting the DNA some distance from this site. Whether the DNA is cut or modified depends on the methylation state of the target sequence. When the target site is unmodified, the DNA is cut. When the target site is hemimethylated, the complex acts as a maintenance MTase modifying the DNA so that both strands become methylated. After locating a non-methylated recognition site, the enzyme complex serves as a molecular motor that translocates DNA in an ATP-dependent manner until a collision occurs that triggers cleavage. The protein is Type I restriction enzyme StySJI methylase subunit of Salmonella typhimurium (strain LT2 / SGSC1412 / ATCC 700720).